Here is an 87-residue protein sequence, read N- to C-terminus: uncharacterized protein (87 aa).

The interval 43–87 (NQGYGQNFGDASGFMGTRSHVDDRDQIDSPASFESEAVNSSIKRK) is disordered.

This is an uncharacterized protein from Bacillus subtilis (strain 168).